A 447-amino-acid polypeptide reads, in one-letter code: Phosphoglucosamine mutase (447 aa).

The active-site Phosphoserine intermediate is Ser-103. Mg(2+)-binding residues include Ser-103, Asp-242, Asp-244, and Asp-246. At Ser-103 the chain carries Phosphoserine.

It belongs to the phosphohexose mutase family. Requires Mg(2+) as cofactor. Post-translationally, activated by phosphorylation.

It catalyses the reaction alpha-D-glucosamine 1-phosphate = D-glucosamine 6-phosphate. Functionally, catalyzes the conversion of glucosamine-6-phosphate to glucosamine-1-phosphate. The protein is Phosphoglucosamine mutase of Cereibacter sphaeroides (strain ATCC 17025 / ATH 2.4.3) (Rhodobacter sphaeroides).